The sequence spans 640 residues: ESX-3 secretion system protein EccA3 (640 aa).

393–400 (GPPGTGKT) serves as a coordination point for ATP.

The protein belongs to the CbxX/CfxQ family. As to quaternary structure, part of the ESX-3 / type VII secretion system (T7SS), which is composed of cytosolic and membrane components.

Its subcellular location is the cytoplasm. In terms of biological role, part of an ESX-3 / type VII specialized secretion system (T7SS), which exports several proteins. EccA3 exhibits ATPase activity and may provide energy for the export of ESX-3 substrates. This chain is ESX-3 secretion system protein EccA3, found in Mycobacterium leprae (strain TN).